A 428-amino-acid chain; its full sequence is Magnesium transporter MRS2-C (428 aa).

A run of 2 helical transmembrane segments spans residues Leu-364 to Gly-384 and Trp-400 to Phe-420. The Required for magnesium transport activity signature appears at Gly-384–Asn-386.

Belongs to the CorA metal ion transporter (MIT) (TC 1.A.35.5) family.

The protein localises to the membrane. Magnesium transporter that may mediate the influx of magnesium. The polypeptide is Magnesium transporter MRS2-C (Oryza sativa subsp. indica (Rice)).